A 207-amino-acid polypeptide reads, in one-letter code: ATP synthase subunit 5, mitochondrial (207 aa).

The protein belongs to the ATPase delta chain family. As to quaternary structure, F-type ATPases have 2 components, CF(1) - the catalytic core - and CF(0) - the membrane proton channel. CF(1) has five subunits: alpha(3), beta(3), gamma(1), delta(1), epsilon(1). CF(0) has three main subunits: a, b and c.

Its subcellular location is the mitochondrion. It localises to the mitochondrion inner membrane. Its function is as follows. Mitochondrial membrane ATP synthase (F(1)F(0) ATP synthase or Complex V) produces ATP from ADP in the presence of a proton gradient across the membrane which is generated by electron transport complexes of the respiratory chain. F-type ATPases consist of two structural domains, F(1) - containing the extramembraneous catalytic core and F(0) - containing the membrane proton channel, linked together by a central stalk and a peripheral stalk. During catalysis, ATP synthesis in the catalytic domain of F(1) is coupled via a rotary mechanism of the central stalk subunits to proton translocation. Part of the complex F(0) domain and the peripheric stalk, which acts as a stator to hold the catalytic alpha(3)beta(3) subcomplex and subunit a/ATP6 static relative to the rotary elements. In Eremothecium gossypii (strain ATCC 10895 / CBS 109.51 / FGSC 9923 / NRRL Y-1056) (Yeast), this protein is ATP synthase subunit 5, mitochondrial (ATP5).